A 138-amino-acid polypeptide reads, in one-letter code: Translation initiation factor 2 subunit beta (138 aa).

The protein belongs to the eIF-2-beta/eIF-5 family. In terms of assembly, heterotrimer composed of an alpha, a beta and a gamma chain.

Its function is as follows. eIF-2 functions in the early steps of protein synthesis by forming a ternary complex with GTP and initiator tRNA. In Methanococcus maripaludis (strain DSM 14266 / JCM 13030 / NBRC 101832 / S2 / LL), this protein is Translation initiation factor 2 subunit beta.